The following is a 430-amino-acid chain: MTEIVAVRGREILDSRGNPTLEVEVVTAAGFVGRAAVPSGASTGQNEAVELRDGEGGRYGGKGVLRAVANVEGELAEAVVGMDVTDQRALDLAMIEADGTENKGRLGANAMLGVSLAAARAAAEYAGLPLYRYLGGPGAHVLPVPCANILNGGAHAANNVDFQEFMVVPVGFESYREALRAVAEIYAALKKLLAERGLAGGIGDEGGFAPDLSSNGEALGLLSEAVERSGYSLGEQVCFALDPAASEFYEGGRYELSGEGRSLERGEMVDYYVRLCGEYPIISIEDGLAEDDWEGWEMISARLGGRVQLVGDDLFVTNPKILRKGIERGIANSILVKVNQIGTLTETFETMDLAHKSGYTAMVSHRSGETDDTTIADLAVAVNAGQIKTGAPARGERVAKYNQLLRIEESLGEAAVYPGLGAFNPRMREG.

A (2R)-2-phosphoglycerate-binding site is contributed by Gln-163. Catalysis depends on Glu-205, which acts as the Proton donor. Mg(2+) is bound by residues Asp-242, Glu-285, and Asp-312. 4 residues coordinate (2R)-2-phosphoglycerate: Lys-337, Arg-366, Ser-367, and Lys-388. Lys-337 serves as the catalytic Proton acceptor.

It belongs to the enolase family. The cofactor is Mg(2+).

It localises to the cytoplasm. The protein resides in the secreted. The protein localises to the cell surface. The enzyme catalyses (2R)-2-phosphoglycerate = phosphoenolpyruvate + H2O. It functions in the pathway carbohydrate degradation; glycolysis; pyruvate from D-glyceraldehyde 3-phosphate: step 4/5. Catalyzes the reversible conversion of 2-phosphoglycerate (2-PG) into phosphoenolpyruvate (PEP). It is essential for the degradation of carbohydrates via glycolysis. The sequence is that of Enolase from Rubrobacter xylanophilus (strain DSM 9941 / JCM 11954 / NBRC 16129 / PRD-1).